Consider the following 79-residue polypeptide: UPF0154 protein SAK_1616 (79 aa).

A helical transmembrane segment spans residues 5-25 (IWILLIIVALFGGLVGGIFIA).

Belongs to the UPF0154 family.

The protein localises to the cell membrane. This chain is UPF0154 protein SAK_1616, found in Streptococcus agalactiae serotype Ia (strain ATCC 27591 / A909 / CDC SS700).